The sequence spans 316 residues: MDYRVLLYYKYTTIDDPELFATEHLAFCKDLELKGRILVSTEGINGTVSGTVEATDKYMEALKNDARFQGITFKVDEAEGHAFKKMHVRPRQEIVALDLEDDVNPRELTGNYLSPKEFREALLSDDTVVIDARNDYEYDLGHFRGAVRPDITRFRDLPDWIKENKEQFMDKKIVTYCTGGIRCEKFSGYLLKEGFEDVSQLEGGIATYGKDPETKGEFWDGKMYVFDERISVEVNHVDKTVVGKEWFDGTPCERYINCSNPECNKQILVSEENEARYLGACSHECAKHENNRYVKKHNISDEEKAKRLENFKELVK.

One can recognise a Rhodanese domain in the interval 123–217 (LSDDTVVIDA…YGKDPETKGE (95 aa)). Catalysis depends on C177, which acts as the Cysteine persulfide intermediate.

It belongs to the TrhO family.

The catalysed reaction is uridine(34) in tRNA + AH2 + O2 = 5-hydroxyuridine(34) in tRNA + A + H2O. Its function is as follows. Catalyzes oxygen-dependent 5-hydroxyuridine (ho5U) modification at position 34 in tRNAs. The sequence is that of tRNA uridine(34) hydroxylase from Staphylococcus saprophyticus subsp. saprophyticus (strain ATCC 15305 / DSM 20229 / NCIMB 8711 / NCTC 7292 / S-41).